The chain runs to 483 residues: Dihydrolipoyllysine-residue acetyltransferase component of pyruvate dehydrogenase complex, mitochondrial (483 aa).

The transit peptide at 1-28 (MLSANMLRRMHHGVAVTRMLLVSNGKVQ) directs the protein to the mitochondrion. The region spanning 53–129 (HTVINMPALS…PVGKPLAVTV (77 aa)) is the Lipoyl-binding domain. The residue at position 94 (K94) is an N6-lipoyllysine. Disordered stretches follow at residues 143-187 (IEDS…DRVF) and 234-254 (EAAA…APGD). A compositionally biased stretch (basic and acidic residues) spans 146-160 (SSAKEPSAKSGEEKS). Residues 161–178 (APSSEKQSKETSSPSNVS) are compositionally biased toward polar residues. Residues 187–224 (FASPLARKLAEEKDLDLSQIRGSGPNGRIIKVDIENFK) enclose the Peripheral subunit-binding (PSBD) domain. The span at 235-252 (AAAKATTPAASAADAAAP) shows a compositional bias: low complexity. Catalysis depends on residues H456 and D460.

It belongs to the 2-oxoacid dehydrogenase family. (R)-lipoate serves as cofactor.

The protein resides in the mitochondrion matrix. The enzyme catalyses N(6)-[(R)-dihydrolipoyl]-L-lysyl-[protein] + acetyl-CoA = N(6)-[(R)-S(8)-acetyldihydrolipoyl]-L-lysyl-[protein] + CoA. The pyruvate dehydrogenase complex catalyzes the overall conversion of pyruvate to acetyl-CoA and CO(2). It contains multiple copies of three enzymatic components: pyruvate dehydrogenase (E1), dihydrolipoamide acetyltransferase (E2) and lipoamide dehydrogenase (E3). This Schizosaccharomyces pombe (strain 972 / ATCC 24843) (Fission yeast) protein is Dihydrolipoyllysine-residue acetyltransferase component of pyruvate dehydrogenase complex, mitochondrial.